The following is a 1396-amino-acid chain: Integrin alpha-PS2 (1396 aa).

A signal peptide spans 1 to 31; the sequence is MSGDSIHRRRMALHCPITSLILLLIAMSAHG. Topologically, residues 32–1341 are extracellular; the sequence is YNIDLPSYVR…EPEPLQVPDV (1310 aa). 7 FG-GAP repeats span residues 36-106, 117-174, 186-239, 266-317, 318-383, 386-445, and 452-514; these read LPSY…DCKL, NVDK…FTSH, RTNN…FPFK, STSE…RWNM, ANIF…TEEK, TTEH…GPLA, and KSEQ…FASN. A glycan (N-linked (GlcNAc...) asparagine) is linked at Asn69. Residue Asn209 is glycosylated (N-linked (GlcNAc...) asparagine). Asn322 carries N-linked (GlcNAc...) asparagine glycosylation. Asn584, Asn598, Asn741, Asn783, Asn833, and Asn959 each carry an N-linked (GlcNAc...) asparagine glycan. Disordered regions lie at residues 960–1107 and 1159–1246; these read STDA…LGTL and PGFQ…KPLQ. The segment covering 963 to 979 has biased composition (basic and acidic residues); it reads AGDKLSPKQVEQRRQED. Positions 997–1006 are enriched in polar residues; it reads QAVQEPQVNQ. N-linked (GlcNAc...) asparagine glycosylation is present at Asn1005. Composition is skewed to low complexity over residues 1007–1021 and 1060–1071; these read TSFT…SSGS and QQQQQHQQLLLA. Positions 1082-1099 are enriched in polar residues; sequence VTFNDKSQFGGRNNNFHT. Low complexity-rich tracts occupy residues 1162-1182 and 1217-1226; these read QGQT…GYQT and SSSSSSSSSS. Residues Asn1299 and Asn1307 are each glycosylated (N-linked (GlcNAc...) asparagine). A helical membrane pass occupies residues 1342–1366; it reads VPLWVVVLAACAGALIFLLLVWLLY. Residues 1367–1396 lie on the Cytoplasmic side of the membrane; that stretch reads KCGFFNRNRPTDHSQERQPLRNGYHGDEHL. The interval 1377 to 1396 is disordered; that stretch reads TDHSQERQPLRNGYHGDEHL.

Belongs to the integrin alpha chain family. In terms of assembly, heterodimer of an alpha and a beta subunit. The alpha subunit is composed of a heavy and a light chain linked by a disulfide bond. Alpha-PS2 associates with beta-PS. The heavy-light chain cleavage site is either in 1230-1231, or 1233-1234, or 1243-1244. In ovaries, highly expressed in follicle cells. At syncytial blastoderm stage, expressed in the embryonic mesodermal precursors but not in the ectoderm. At embryonic stages 7 and 10, expression is restricted to the mesoderm. At stage 12, expressed in the gonadal sheath and the interstitial cells of the gonad. In stage 16 embryos, expressed in the somatic and visceral muscles where localizes to sites of attachment between adjacent muscles. In third larval instar wing imaginal disk, expressed in the ventral compartment and in a subset of adepithelial and peripodial cells (at protein level).

Its subcellular location is the apical cell membrane. It is found in the lateral cell membrane. The protein resides in the basal cell membrane. Its function is as follows. Alpha-PS2/beta-PS is a receptor for Tig, wb and Ten-m. Involved in the function and/or development of the olfactory system. In Drosophila melanogaster (Fruit fly), this protein is Integrin alpha-PS2 (if).